Consider the following 258-residue polypeptide: Imidazole glycerol phosphate synthase subunit HisF (258 aa).

Residues D11 and D130 contribute to the active site.

The protein belongs to the HisA/HisF family. In terms of assembly, heterodimer of HisH and HisF.

The protein localises to the cytoplasm. The catalysed reaction is 5-[(5-phospho-1-deoxy-D-ribulos-1-ylimino)methylamino]-1-(5-phospho-beta-D-ribosyl)imidazole-4-carboxamide + L-glutamine = D-erythro-1-(imidazol-4-yl)glycerol 3-phosphate + 5-amino-1-(5-phospho-beta-D-ribosyl)imidazole-4-carboxamide + L-glutamate + H(+). The protein operates within amino-acid biosynthesis; L-histidine biosynthesis; L-histidine from 5-phospho-alpha-D-ribose 1-diphosphate: step 5/9. IGPS catalyzes the conversion of PRFAR and glutamine to IGP, AICAR and glutamate. The HisF subunit catalyzes the cyclization activity that produces IGP and AICAR from PRFAR using the ammonia provided by the HisH subunit. The protein is Imidazole glycerol phosphate synthase subunit HisF of Edwardsiella ictaluri (strain 93-146).